Consider the following 112-residue polypeptide: MHVLYSTSAHILPSGRHINVARTPWLRLDIVSIIGILLHSGPIAGFSINMIIFRDAFIPLTKVIENKKMNNIISYSYIYIYIYICHITVENPGDITDKHYTRMNVSHYYIIT.

2 helical membrane-spanning segments follow: residues 33–53 (IIGI…MIIF) and 69–89 (MNNI…HITV).

It is found in the membrane. This is an uncharacterized protein from Saccharomyces cerevisiae (strain ATCC 204508 / S288c) (Baker's yeast).